The sequence spans 86 residues: Large ribosomal subunit protein eL20 (86 aa).

This sequence belongs to the eukaryotic ribosomal protein eL20 family. Part of the 50S ribosomal subunit. Binds 23S rRNA.

In Metallosphaera sedula (strain ATCC 51363 / DSM 5348 / JCM 9185 / NBRC 15509 / TH2), this protein is Large ribosomal subunit protein eL20.